Here is a 672-residue protein sequence, read N- to C-terminus: MESIIQQINQLRTSLRHHEHLYHVLDAPEIPDAEYDRLMQQLRELEAQHPELITNDSPTQRVGAAPLDAFEQVKHEVPMLSLDNVFDEESYLAFDKRVHDRLKRADPLTFCCELKLDGLAVSLLYEDGELVRAATRGDGTTGENITANVRTIRAIPLRLQGDNIPRRVEVRGEVFMPLAGFEQLNDEARRKGGKVFANPRNAAAGSLRQLDPRITAKRPLTFFCYGVGLLEGGELPRSHIQRLMQFKAWGLPVSERVKLCTGSEQVIAFYRQVEQDRGGLGFDIDGVVIKVDSLDLQEQLGFVARAPRWATAFKFPAQEQITQVREVEFQVGRTGAITPVARLEPVQVAGVIVSNATLHNADEIERLGLRIGDTVIVRRAGDVIPQVVGVVMDQRPQDAKEITFPEHCPVCGSDIERVEGEAVARCTGGLFCAAQRKEALKHFVSRRALDVDGMGDKIIEQLVEKQYVENPADLFTLTAGKLTGLDRMGPKSAQNLIVALEKAKQTTFARFLYALGIREVGEATAANLAAHFRNLENLRAADIEALKSVPDVGEVVAKHVVNFLGEEHNQKVIEALEKVITWPEPQQIIAEEIDSPFAGKTVVLTGSLTILSRDEAKDRLAALGAKVSGSVSKKTDLVIAGEAAGSKLVKAQELGITVIDEAEMIRLLGESS.

NAD(+) contacts are provided by residues 32–36, 81–82, and glutamate 113; these read DAEYD and SL. The N6-AMP-lysine intermediate role is filled by lysine 115. Residues arginine 136, glutamate 173, lysine 290, and lysine 314 each contribute to the NAD(+) site. Positions 408, 411, 426, and 432 each coordinate Zn(2+). One can recognise a BRCT domain in the interval 592-672; it reads EIDSPFAGKT…EMIRLLGESS (81 aa).

The protein belongs to the NAD-dependent DNA ligase family. LigA subfamily. It depends on Mg(2+) as a cofactor. Requires Mn(2+) as cofactor.

The catalysed reaction is NAD(+) + (deoxyribonucleotide)n-3'-hydroxyl + 5'-phospho-(deoxyribonucleotide)m = (deoxyribonucleotide)n+m + AMP + beta-nicotinamide D-nucleotide.. Its function is as follows. DNA ligase that catalyzes the formation of phosphodiester linkages between 5'-phosphoryl and 3'-hydroxyl groups in double-stranded DNA using NAD as a coenzyme and as the energy source for the reaction. It is essential for DNA replication and repair of damaged DNA. This chain is DNA ligase, found in Yersinia enterocolitica serotype O:8 / biotype 1B (strain NCTC 13174 / 8081).